The primary structure comprises 291 residues: 33 kDa chaperonin (291 aa).

2 cysteine pairs are disulfide-bonded: Cys-235–Cys-237 and Cys-268–Cys-271.

Belongs to the HSP33 family. Post-translationally, under oxidizing conditions two disulfide bonds are formed involving the reactive cysteines. Under reducing conditions zinc is bound to the reactive cysteines and the protein is inactive.

It localises to the cytoplasm. Redox regulated molecular chaperone. Protects both thermally unfolding and oxidatively damaged proteins from irreversible aggregation. Plays an important role in the bacterial defense system toward oxidative stress. This chain is 33 kDa chaperonin, found in Bacillus subtilis (strain 168).